The sequence spans 434 residues: Enolase (434 aa).

Q165 is a (2R)-2-phosphoglycerate binding site. Catalysis depends on E207, which acts as the Proton donor. Residues D244, E291, and D318 each contribute to the Mg(2+) site. (2R)-2-phosphoglycerate is bound by residues K343, R372, S373, and K394. K343 (proton acceptor) is an active-site residue.

This sequence belongs to the enolase family. It depends on Mg(2+) as a cofactor.

Its subcellular location is the cytoplasm. The protein resides in the secreted. The protein localises to the cell surface. It carries out the reaction (2R)-2-phosphoglycerate = phosphoenolpyruvate + H2O. Its pathway is carbohydrate degradation; glycolysis; pyruvate from D-glyceraldehyde 3-phosphate: step 4/5. In terms of biological role, catalyzes the reversible conversion of 2-phosphoglycerate (2-PG) into phosphoenolpyruvate (PEP). It is essential for the degradation of carbohydrates via glycolysis. The chain is Enolase from Macrococcus caseolyticus (strain JCSC5402) (Macrococcoides caseolyticum).